Here is a 406-residue protein sequence, read N- to C-terminus: MDFSLSEEQTMLKEVARRFTANELMPLEKVLLEREMRMWTDGYTLLPEADHARLMKITQEMGFWGIEVDEKLGGQGLGMFAKTLVVEEMSKSLIGFSHHGFTLPPDAPNLYYLEECGSPAQRDKYVRRYCRGEIDSAMMATEPGAGSDISGLTTTAVRENGQWVINGSKIFISKCDKDELFFICIAVTDKEAPTKRRFTAFILDKDTPGLRIGAEIPVIGAMPTWSVYLDNVRVGDEAVLGEVGDAFIPLQNRFGVRRIELAAHCTGMAERLIQMMIDQANLRKTFGVALADRQTVQNWIADSTIELEQVRLQLYFTAWKSDQGHKDLRLEAASLKIAATEMLTRVADRAIQLHGGLGLSREMGIEYVARMVRIWRVVEGASEIHRMSIAKKLLTDGRTYSPFVAA.

The protein belongs to the acyl-CoA dehydrogenase family. Homotetramer. FAD serves as cofactor.

It carries out the reaction (R)-2-benzylsuccinyl-CoA + oxidized [electron-transfer flavoprotein] + H(+) = (E)-2-benzylidenesuccinyl-CoA + reduced [electron-transfer flavoprotein]. Its pathway is xenobiotic degradation; toluene degradation. Its activity is regulated as follows. Inhibited by (S)-benzylsuccinyl-CoA. In terms of biological role, catalyzes the oxidation of benzylsuccinyl-CoA to benzylidenesuccinyl-CoA. The polypeptide is (R)-benzylsuccinyl-CoA dehydrogenase (bbsG) (Thauera aromatica).